A 204-amino-acid chain; its full sequence is High frequency lysogenization protein HflD homolog (204 aa).

It belongs to the HflD family.

It localises to the cytoplasm. The protein localises to the cell inner membrane. In Stenotrophomonas maltophilia (strain R551-3), this protein is High frequency lysogenization protein HflD homolog.